Consider the following 442-residue polypeptide: tRNA-2-methylthio-N(6)-dimethylallyladenosine synthase (442 aa).

In terms of domain architecture, MTTase N-terminal spans 3 to 118 (KKVFIKTFGC…LPELLNARAA (116 aa)). Residues Cys12, Cys49, Cys81, Cys155, Cys159, and Cys162 each contribute to the [4Fe-4S] cluster site. Residues 141–374 (RVEGSSAFVS…QAVINNNIKD (234 aa)) form the Radical SAM core domain. Residues 377-440 (DERVGTVQRL…TFTLRGEVVV (64 aa)) form the TRAM domain.

The protein belongs to the methylthiotransferase family. MiaB subfamily. As to quaternary structure, monomer. It depends on [4Fe-4S] cluster as a cofactor.

Its subcellular location is the cytoplasm. The catalysed reaction is N(6)-dimethylallyladenosine(37) in tRNA + (sulfur carrier)-SH + AH2 + 2 S-adenosyl-L-methionine = 2-methylsulfanyl-N(6)-dimethylallyladenosine(37) in tRNA + (sulfur carrier)-H + 5'-deoxyadenosine + L-methionine + A + S-adenosyl-L-homocysteine + 2 H(+). Its function is as follows. Catalyzes the methylthiolation of N6-(dimethylallyl)adenosine (i(6)A), leading to the formation of 2-methylthio-N6-(dimethylallyl)adenosine (ms(2)i(6)A) at position 37 in tRNAs that read codons beginning with uridine. The sequence is that of tRNA-2-methylthio-N(6)-dimethylallyladenosine synthase from Delftia acidovorans (strain DSM 14801 / SPH-1).